A 297-amino-acid polypeptide reads, in one-letter code: 1D-myo-inositol 2-acetamido-2-deoxy-alpha-D-glucopyranoside deacetylase (297 aa).

3 residues coordinate Zn(2+): His-14, Asp-17, and His-149.

Belongs to the MshB deacetylase family. Requires Zn(2+) as cofactor.

The enzyme catalyses 1D-myo-inositol 2-acetamido-2-deoxy-alpha-D-glucopyranoside + H2O = 1D-myo-inositol 2-amino-2-deoxy-alpha-D-glucopyranoside + acetate. Functionally, catalyzes the deacetylation of 1D-myo-inositol 2-acetamido-2-deoxy-alpha-D-glucopyranoside (GlcNAc-Ins) in the mycothiol biosynthesis pathway. The sequence is that of 1D-myo-inositol 2-acetamido-2-deoxy-alpha-D-glucopyranoside deacetylase from Thermomonospora curvata (strain ATCC 19995 / DSM 43183 / JCM 3096 / KCTC 9072 / NBRC 15933 / NCIMB 10081 / Henssen B9).